The primary structure comprises 417 residues: MRALAYFGKGNIRFTNHLKEPHIVAPDELVIDIEWCGICGTDLHEYTDGPIFFPEDGHTHEISHNPLPQAMGHEMAGTVLEVGPGVKNLKVGDKVVVEPTGTCRDRYRWPLSPNVDKEWCAACKKGYYNICSYLGLCGAGVQSGGFAERVVMNESHCYKVPDFVPLDVAALIQPLAVCWHAIRVCEFKAGSTALIIGAGPIGLGTILALNAAGCKDIVVSEPAKVRRELAEKMGARVYDPTAHAAKESIDYLRSIADGGDGFDYTFDCSGLEVTLNAAIQCLTFRGTAVNLAMWGHHKIQFSPMDITLHERKYTGSMCYTHHDFEAVIEALEEGRIDIDRARHMITGRVNIEDGLDGAIMKLINEKESTIKIILTPNNHGELNREADNEKKEISELSSRKDQERLRESINEAKLRHT.

Residue Cys-39 participates in Zn(2+) binding. Ser-63 is modified (phosphoserine). His-64, Cys-120, Cys-123, Cys-131, and Gln-173 together coordinate Zn(2+). Residues 380-417 (GELNREADNEKKEISELSSRKDQERLRESINEAKLRHT) form a disordered region. Residues 381–417 (ELNREADNEKKEISELSSRKDQERLRESINEAKLRHT) are compositionally biased toward basic and acidic residues.

This sequence belongs to the zinc-containing alcohol dehydrogenase family. Zn(2+) serves as cofactor.

It localises to the cytoplasm. Its subcellular location is the nucleus. It carries out the reaction (R)-acetoin + NAD(+) = diacetyl + NADH + H(+). Catalyzes the irreversible reduction of 2,3-butanediol to (S)-acetoin in the presence of NADH. The protein is Probable diacetyl reductase [(R)-acetoin forming] 2 (BDH2) of Saccharomyces cerevisiae (strain ATCC 204508 / S288c) (Baker's yeast).